We begin with the raw amino-acid sequence, 103 residues long: Large ribosomal subunit protein uL23 (103 aa).

The protein belongs to the universal ribosomal protein uL23 family. In terms of assembly, part of the 50S ribosomal subunit. Contacts protein L29, and trigger factor when it is bound to the ribosome.

In terms of biological role, one of the early assembly proteins it binds 23S rRNA. One of the proteins that surrounds the polypeptide exit tunnel on the outside of the ribosome. Forms the main docking site for trigger factor binding to the ribosome. The sequence is that of Large ribosomal subunit protein uL23 from Zymomonas mobilis subsp. mobilis (strain ATCC 31821 / ZM4 / CP4).